The following is a 252-amino-acid chain: Small ribosomal subunit protein uS3 (252 aa).

A KH type-2 domain is found at 16-85 (IDEYLETKLE…NPQVEVKEVD (70 aa)). A disordered region spans residues 233–252 (EESEIEEITEEIEDVETLEE).

The protein belongs to the universal ribosomal protein uS3 family. As to quaternary structure, part of the 30S ribosomal subunit.

Functionally, binds the lower part of the 30S subunit head. The chain is Small ribosomal subunit protein uS3 from Methanosphaera stadtmanae (strain ATCC 43021 / DSM 3091 / JCM 11832 / MCB-3).